Here is a 424-residue protein sequence, read N- to C-terminus: Imidazolonepropionase (424 aa).

Positions 85 and 87 each coordinate Fe(3+). Residues histidine 85 and histidine 87 each contribute to the Zn(2+) site. Residues arginine 94, tyrosine 157, and histidine 190 each coordinate 4-imidazolone-5-propanoate. Tyrosine 157 contributes to the N-formimidoyl-L-glutamate binding site. Residue histidine 255 coordinates Fe(3+). Position 255 (histidine 255) interacts with Zn(2+). Position 258 (glutamate 258) interacts with 4-imidazolone-5-propanoate. Fe(3+) is bound at residue aspartate 329. Aspartate 329 is a Zn(2+) binding site. Residues asparagine 331 and glycine 333 each coordinate N-formimidoyl-L-glutamate. Serine 334 contributes to the 4-imidazolone-5-propanoate binding site.

It belongs to the metallo-dependent hydrolases superfamily. HutI family. Zn(2+) serves as cofactor. Requires Fe(3+) as cofactor.

It localises to the cytoplasm. It catalyses the reaction 4-imidazolone-5-propanoate + H2O = N-formimidoyl-L-glutamate. It functions in the pathway amino-acid degradation; L-histidine degradation into L-glutamate; N-formimidoyl-L-glutamate from L-histidine: step 3/3. Catalyzes the hydrolytic cleavage of the carbon-nitrogen bond in imidazolone-5-propanoate to yield N-formimidoyl-L-glutamate. It is the third step in the universal histidine degradation pathway. This Brevibacillus brevis (strain 47 / JCM 6285 / NBRC 100599) protein is Imidazolonepropionase.